A 303-amino-acid chain; its full sequence is Pycsar effector protein BcPycTIR (303 aa).

Residue 22–138 (KLVGGDKGLA…RRMAKELSKR (117 aa)) coordinates a nucleoside 3',5'-cyclic phosphate. A TIR-like region spans residues 154-273 (RVFVISSAEA…DMAGVTTIPY (120 aa)).

As to quaternary structure, purified protein forms large 2-dimensional sheets when incubated with cUMP and shorter filaments in the presence of cCMP.

It localises to the cytoplasm. The catalysed reaction is NAD(+) + H2O = ADP-D-ribose + nicotinamide + H(+). Its activity is regulated as follows. Activated by cyclic UMP (cUMP) and to a lesser extent by cCMP. In terms of biological role, pycsar (pyrimidine cyclase system for antiphage resistance) provides immunity against bacteriophage. The pyrimidine cyclase (PycC) synthesizes cyclic nucleotides in response to infection; these serve as specific second messenger signals. The signals activate the adjacent effector, leading to bacterial cell death and abortive phage infection. A clade B Pycsar system. Its function is as follows. The effector protein of a two-gene Pycsar system. Upon activation by cyclic UMP (cUMP) degrades cellular NAD(+). Expression of this and adjacent uridylate cyclase BcPycC (AC A0A0J5ZXG5) probably confers resistance to bacteriophage. The genes are probably only expressed in response to bacteriophage infection. This protein probably only responds to cUMP (produced by its cognate NTP cyclase). This is Pycsar effector protein BcPycTIR from Burkholderia cepacia (Pseudomonas cepacia).